Here is a 214-residue protein sequence, read N- to C-terminus: Inner membrane-spanning protein YciB (214 aa).

Transmembrane regions (helical) follow at residues 11–31, 50–70, 81–101, 119–139, and 149–169; these read ILFF…VAII, MHII…ILQD, VNWG…KPII, LSYM…YVAY, and FKLF…GVYI.

The protein belongs to the YciB family.

Its subcellular location is the cell inner membrane. Functionally, plays a role in cell envelope biogenesis, maintenance of cell envelope integrity and membrane homeostasis. In Hydrogenovibrio crunogenus (strain DSM 25203 / XCL-2) (Thiomicrospira crunogena), this protein is Inner membrane-spanning protein YciB.